The sequence spans 152 residues: SKP1-like protein 12 (152 aa).

Residues 94 to 152 (ILAANYLNIKSLFDLTCQTVADMIKGKTPEEIRSTFNIENDFTPEEEEAVRKENQWAFE) are interaction with the F-box domain of F-box proteins.

It belongs to the SKP1 family. Part of a SCF (SKP1-cullin-F-box) protein ligase complex. Interacts with ADO3/FKF1, COI1/FBL2, EBF1/FBL6, PP2B10, At3g61590 and At5g49610. Expressed in young seedlings, roots, leaves, floral stems, inflorescences, and siliques, with a slightly higher level in inflorescence than in other tissues.

It localises to the nucleus. The protein operates within protein modification; protein ubiquitination. Functionally, involved in ubiquitination and subsequent proteasomal degradation of target proteins. Together with CUL1, RBX1 and a F-box protein, it forms a SCF E3 ubiquitin ligase complex. The functional specificity of this complex depends on the type of F-box protein. In the SCF complex, it serves as an adapter that links the F-box protein to CUL1. Plays a role during early flowers reproductive development. This chain is SKP1-like protein 12 (ASK12), found in Arabidopsis thaliana (Mouse-ear cress).